Reading from the N-terminus, the 127-residue chain is Mu-like prophage FluMu protein gp41 (127 aa).

The interval 107 to 127 is disordered; the sequence is VSRGRLDTADQETGKDLSAVS. Residues 110–121 are compositionally biased toward basic and acidic residues; sequence GRLDTADQETGK.

The protein to phage Mu protein gp41.

In Haemophilus influenzae (strain ATCC 51907 / DSM 11121 / KW20 / Rd), this protein is Mu-like prophage FluMu protein gp41.